A 141-amino-acid polypeptide reads, in one-letter code: HTH-type transcriptional repressor NsrR (141 aa).

Residues 2–129 (QLTSFTDYGL…DNYTLADMVQ (128 aa)) form the HTH rrf2-type domain. The H-T-H motif DNA-binding region spans 28–51 (ISQVTEVYGVSRNHMVKIINQLSR). 3 residues coordinate [2Fe-2S] cluster: Cys91, Cys96, and Cys102.

Requires [2Fe-2S] cluster as cofactor.

Nitric oxide-sensitive repressor of genes involved in protecting the cell against nitrosative stress. May require iron for activity. The chain is HTH-type transcriptional repressor NsrR from Yersinia enterocolitica serotype O:8 / biotype 1B (strain NCTC 13174 / 8081).